Here is a 448-residue protein sequence, read N- to C-terminus: Probable glycine dehydrogenase (decarboxylating) subunit 1 (448 aa).

It belongs to the GcvP family. N-terminal subunit subfamily. The glycine cleavage system is composed of four proteins: P, T, L and H. In this organism, the P 'protein' is a heterodimer of two subunits.

It carries out the reaction N(6)-[(R)-lipoyl]-L-lysyl-[glycine-cleavage complex H protein] + glycine + H(+) = N(6)-[(R)-S(8)-aminomethyldihydrolipoyl]-L-lysyl-[glycine-cleavage complex H protein] + CO2. Functionally, the glycine cleavage system catalyzes the degradation of glycine. The P protein binds the alpha-amino group of glycine through its pyridoxal phosphate cofactor; CO(2) is released and the remaining methylamine moiety is then transferred to the lipoamide cofactor of the H protein. The protein is Probable glycine dehydrogenase (decarboxylating) subunit 1 of Listeria innocua serovar 6a (strain ATCC BAA-680 / CLIP 11262).